The following is a 149-amino-acid chain: Calmodulin (149 aa).

EF-hand domains lie at 8-43, 44-79, 81-116, and 117-149; these read QQIA…LGQN, PSES…KMKD, DSEA…IGEK, and LSDA…LAAK. Ca(2+) is bound by residues aspartate 21, aspartate 23, aspartate 25, lysine 27, glutamate 32, aspartate 57, asparagine 59, aspartate 61, serine 63, glutamate 68, aspartate 94, asparagine 96, aspartate 98, lysine 100, glutamate 105, aspartate 130, asparagine 132, aspartate 134, glutamate 136, and glutamate 141.

This sequence belongs to the calmodulin family.

In terms of biological role, calmodulin mediates the control of a large number of enzymes, ion channels and other proteins by Ca(2+). Among the enzymes to be stimulated by the calmodulin-Ca(2+) complex are a number of protein kinases and phosphatases. This is Calmodulin (CMD1) from Candida albicans (Yeast).